A 451-amino-acid chain; its full sequence is Bifunctional protein GlmU (451 aa).

Residues 1–217 are pyrophosphorylase; it reads MKTLILAAGL…IDEVTGVNDR (217 aa). UDP-N-acetyl-alpha-D-glucosamine-binding positions include 6-9, K20, Q68, 73-74, 95-97, G134, E146, N161, and N215; these read LAAG, GT, and YGD. A Mg(2+)-binding site is contributed by D97. Residue N215 coordinates Mg(2+). The interval 218–238 is linker; sequence IQLSKLEKNMRKRINEKLMRE. An N-acetyltransferase region spans residues 239–451; the sequence is GVRIIDPESV…GGNQNADSKE (213 aa). UDP-N-acetyl-alpha-D-glucosamine is bound by residues R320 and K338. Residue H350 is the Proton acceptor of the active site. UDP-N-acetyl-alpha-D-glucosamine contacts are provided by Y353 and N364. Acetyl-CoA is bound by residues A367, 373 to 374, S392, A410, and R427; that span reads NY.

It in the N-terminal section; belongs to the N-acetylglucosamine-1-phosphate uridyltransferase family. The protein in the C-terminal section; belongs to the transferase hexapeptide repeat family. Homotrimer. Requires Mg(2+) as cofactor.

Its subcellular location is the cytoplasm. The catalysed reaction is alpha-D-glucosamine 1-phosphate + acetyl-CoA = N-acetyl-alpha-D-glucosamine 1-phosphate + CoA + H(+). The enzyme catalyses N-acetyl-alpha-D-glucosamine 1-phosphate + UTP + H(+) = UDP-N-acetyl-alpha-D-glucosamine + diphosphate. The protein operates within nucleotide-sugar biosynthesis; UDP-N-acetyl-alpha-D-glucosamine biosynthesis; N-acetyl-alpha-D-glucosamine 1-phosphate from alpha-D-glucosamine 6-phosphate (route II): step 2/2. Its pathway is nucleotide-sugar biosynthesis; UDP-N-acetyl-alpha-D-glucosamine biosynthesis; UDP-N-acetyl-alpha-D-glucosamine from N-acetyl-alpha-D-glucosamine 1-phosphate: step 1/1. It participates in bacterial outer membrane biogenesis; LPS lipid A biosynthesis. Its function is as follows. Catalyzes the last two sequential reactions in the de novo biosynthetic pathway for UDP-N-acetylglucosamine (UDP-GlcNAc). The C-terminal domain catalyzes the transfer of acetyl group from acetyl coenzyme A to glucosamine-1-phosphate (GlcN-1-P) to produce N-acetylglucosamine-1-phosphate (GlcNAc-1-P), which is converted into UDP-GlcNAc by the transfer of uridine 5-monophosphate (from uridine 5-triphosphate), a reaction catalyzed by the N-terminal domain. In Thermosipho africanus (strain TCF52B), this protein is Bifunctional protein GlmU.